A 238-amino-acid polypeptide reads, in one-letter code: RAD9, HUS1, RAD1-interacting nuclear orphan protein 1 (238 aa).

Basic residues predominate over residues 1–10 (MPPRKKRRQP). Residues 1–31 (MPPRKKRRQPSQKAPLLFHQQPLEGPKHSCA) are disordered. Ser51 is modified (phosphoserine; by PLK1). The RAD1-binding motif motif lies at 55–61 (SWVSPDF). Positions 74–105 (KHQNRARHSSRKPTTSKFPHLTFESPQSSSSE) are disordered. Residues 75–84 (HQNRARHSSR) are compositionally biased toward basic residues. Positions 125 to 132 (RRPLVPVL) match the D-box motif. Positions 174 to 178 (QKENS) match the KEN box motif.

In terms of assembly, interacts (when phosphorylated by PLK1) with POLQ; promoting POLQ recruitment to DNA damage sites. Interacts with RAD1; interaction is direct and promotes association with the 9-1-1 (RAD9-RAD1-HUS1) complex. Interacts with RAD18. Interacts with TOPBP1. Interacts with UBE2N. Phosphorylated at Ser-51 by PLK1, promoting interaction with polymerase theta (POLQ). In terms of processing, ubiquitinated and degraded by the APC/C complex upon mitotic exit. Weakly expressed in testis, prostate, ovary, thymus and small intestine. Expressed strongly in breast cancer cells.

The protein resides in the nucleus. It localises to the chromosome. Its function is as follows. Involved in microhomology-mediated end-joining (MMEJ) DNA repair by promoting recruitment of polymerase theta (POLQ) to DNA damage sites during mitosis. MMEJ is an alternative non-homologous end-joining (NHEJ) machinery that takes place during mitosis to repair double-strand breaks in DNA that originate in S-phase. Accumulates in M-phase; following phosphorylation by PLK1, interacts with POLQ, enabling its recruitment to double-strand breaks for subsequent repair. Also involved in the DNA damage response (DDR) signaling in response to genotoxic stresses such as ionizing radiation (IR) during the S phase. Recruited to sites of DNA damage through interaction with the 9-1-1 cell-cycle checkpoint response complex and TOPBP1 in a ATR-dependent manner. Required for the progression of the G1 to S phase transition. Plays a role in the stimulation of CHEK1 phosphorylation. The protein is RAD9, HUS1, RAD1-interacting nuclear orphan protein 1 of Homo sapiens (Human).